A 146-amino-acid polypeptide reads, in one-letter code: UPF0178 protein BCA_3127 (146 aa).

This sequence belongs to the UPF0178 family.

This Bacillus cereus (strain 03BB102) protein is UPF0178 protein BCA_3127.